An 84-amino-acid polypeptide reads, in one-letter code: Small ribosomal subunit protein uS17 (84 aa).

This sequence belongs to the universal ribosomal protein uS17 family. Part of the 30S ribosomal subunit.

Its function is as follows. One of the primary rRNA binding proteins, it binds specifically to the 5'-end of 16S ribosomal RNA. This chain is Small ribosomal subunit protein uS17, found in Photobacterium profundum (strain SS9).